The sequence spans 156 residues: Small ribosomal subunit protein uS7 (156 aa).

It belongs to the universal ribosomal protein uS7 family. As to quaternary structure, part of the 30S ribosomal subunit. Contacts proteins S9 and S11.

One of the primary rRNA binding proteins, it binds directly to 16S rRNA where it nucleates assembly of the head domain of the 30S subunit. Is located at the subunit interface close to the decoding center, probably blocks exit of the E-site tRNA. The chain is Small ribosomal subunit protein uS7 from Prochlorococcus marinus (strain MIT 9312).